The sequence spans 125 residues: Small ribosomal subunit protein uS13 (125 aa).

Residues 92–125 (RRSLPARGQRTRTNARTRKGKRKTVAGKKKAGKK) are disordered.

The protein belongs to the universal ribosomal protein uS13 family. Part of the 30S ribosomal subunit. Forms a loose heterodimer with protein S19. Forms two bridges to the 50S subunit in the 70S ribosome.

In terms of biological role, located at the top of the head of the 30S subunit, it contacts several helices of the 16S rRNA. In the 70S ribosome it contacts the 23S rRNA (bridge B1a) and protein L5 of the 50S subunit (bridge B1b), connecting the 2 subunits; these bridges are implicated in subunit movement. Contacts the tRNAs in the A and P-sites. This chain is Small ribosomal subunit protein uS13, found in Chlorobaculum parvum (strain DSM 263 / NCIMB 8327) (Chlorobium vibrioforme subsp. thiosulfatophilum).